Here is a 235-residue protein sequence, read N- to C-terminus: Lipoprotein-releasing system ATP-binding protein LolD (235 aa).

The 223-residue stretch at Leu-13–Ile-235 folds into the ABC transporter domain. Gly-49 to Ser-56 is a binding site for ATP.

This sequence belongs to the ABC transporter superfamily. Lipoprotein translocase (TC 3.A.1.125) family. As to quaternary structure, the complex is composed of two ATP-binding proteins (LolD) and two transmembrane proteins (LolC and LolE).

It is found in the cell inner membrane. In terms of biological role, part of the ABC transporter complex LolCDE involved in the translocation of mature outer membrane-directed lipoproteins, from the inner membrane to the periplasmic chaperone, LolA. Responsible for the formation of the LolA-lipoprotein complex in an ATP-dependent manner. The polypeptide is Lipoprotein-releasing system ATP-binding protein LolD (Blochmanniella floridana).